Reading from the N-terminus, the 99-residue chain is MKTLVLVAVLGLASLYLLSYASEVQQISRDEEDFRALMASFGGIFDTEERGVDKEGCRKMFGDCWGDGDCCLHLGCKTRKLPPWTDKPYCAWDWTFGRK.

An N-terminal signal peptide occupies residues 1–21 (MKTLVLVAVLGLASLYLLSYA). Residues 22–50 (SEVQQISRDEEDFRALMASFGGIFDTEER) constitute a propeptide that is removed on maturation. 3 disulfides stabilise this stretch: Cys-57/Cys-71, Cys-64/Cys-76, and Cys-70/Cys-90.

The protein belongs to the neurotoxin 10 (Hwtx-1) family. 25 (ICK4) subfamily. As to expression, expressed by the venom gland.

The protein resides in the secreted. Its function is as follows. Ion channel inhibitor. The chain is U11-barytoxin-Tl1a from Trittame loki (Brush-footed trapdoor spider).